The sequence spans 226 residues: tRNA (guanine-N(1)-)-methyltransferase (226 aa).

S-adenosyl-L-methionine is bound by residues G110 and I130 to L135.

It belongs to the RNA methyltransferase TrmD family. As to quaternary structure, homodimer.

Its subcellular location is the cytoplasm. The catalysed reaction is guanosine(37) in tRNA + S-adenosyl-L-methionine = N(1)-methylguanosine(37) in tRNA + S-adenosyl-L-homocysteine + H(+). Functionally, specifically methylates guanosine-37 in various tRNAs. The sequence is that of tRNA (guanine-N(1)-)-methyltransferase from Nitratiruptor sp. (strain SB155-2).